Here is a 405-residue protein sequence, read N- to C-terminus: SPbeta prophage-derived uncharacterized protein YomR (405 aa).

Positions 9 to 36 (QLKQNNIQINSLRGSNDRAEKHMLEHEQ) form a coiled coil.

The chain is SPbeta prophage-derived uncharacterized protein YomR (yomR) from Bacillus subtilis (strain 168).